Here is a 230-residue protein sequence, read N- to C-terminus: MTTLPARPEAITFAPQHSALIVVDMQNAYASQGGYLDLAGFDVSATQPVIANIKTAVAAARAAGILIIWFQNGWDDQYVEAGGPGSPNFHKSNALKTMRNRPELQGTLLAKGGWDYQLVDELVPEPGDIVLPKPRYSGFFNTPLDSLLRSRGIRHLIFTGIATNVCVESTLRDGFFLEYFGVVLEDATHQAGPEFAQKAALFNIETFFGWVSTVADFCDAVSPPSLARIA.

Asp-24 acts as the Proton acceptor in catalysis. Lys-133 is a catalytic residue. The Nucleophile role is filled by Cys-166.

It belongs to the isochorismatase family. RutB subfamily.

The enzyme catalyses (Z)-3-ureidoacrylate + H2O + H(+) = (Z)-3-aminoacrylate + NH4(+) + CO2. It catalyses the reaction (Z)-3-ureidoacrylate + H2O = (Z)-3-aminoacrylate + carbamate + H(+). It carries out the reaction (Z)-2-methylureidoacrylate + H2O + H(+) = (Z)-2-methylaminoacrylate + NH4(+) + CO2. Its function is as follows. Hydrolyzes ureidoacrylate to form aminoacrylate and carbamate. The carbamate hydrolyzes spontaneously, thereby releasing one of the nitrogen atoms of the pyrimidine ring as ammonia and one of its carbon atoms as CO2. The chain is Ureidoacrylate amidohydrolase RutB from Enterobacter sp. (strain 638).